The following is a 174-amino-acid chain: MQELKTLLDELKSQSFFNENEICVIGCSTSEVIGQKIGSVGSMEVAEAIFNALEEVKQDTGVSFAFQGCEHINRAVTIEREDFNPLTMEEVTVVPDVHAGGSLATYAYKHMNDPIVVEHISVPKGIDIGQTLIGMHIKHICVPVRTSVKQVGEAIVTIATSRPKKIGGERAKYE.

Belongs to the UPF0340 family.

This is UPF0340 protein SH0921 from Staphylococcus haemolyticus (strain JCSC1435).